The following is a 127-amino-acid chain: Small ribosomal subunit protein uS11 (127 aa).

This sequence belongs to the universal ribosomal protein uS11 family. As to quaternary structure, part of the 30S ribosomal subunit. Interacts with proteins S7 and S18. Binds to IF-3.

Located on the platform of the 30S subunit, it bridges several disparate RNA helices of the 16S rRNA. Forms part of the Shine-Dalgarno cleft in the 70S ribosome. The chain is Small ribosomal subunit protein uS11 from Chlorobium limicola (strain DSM 245 / NBRC 103803 / 6330).